Here is a 373-residue protein sequence, read N- to C-terminus: Flagellar P-ring protein (373 aa).

The signal sequence occupies residues 1–26; that stretch reads MRLLFRFLTLVAVLAMSLADVAPAWA.

Belongs to the FlgI family. The basal body constitutes a major portion of the flagellar organelle and consists of four rings (L,P,S, and M) mounted on a central rod.

It is found in the periplasm. Its subcellular location is the bacterial flagellum basal body. Its function is as follows. Assembles around the rod to form the L-ring and probably protects the motor/basal body from shearing forces during rotation. This Rhizobium etli (strain CIAT 652) protein is Flagellar P-ring protein.